Reading from the N-terminus, the 482-residue chain is Proline--tRNA ligase (482 aa).

L-proline is bound by residues threonine 117, glutamate 119, and arginine 148. Arginine 148, glutamate 150, glutamine 232, and threonine 235 together coordinate ATP. Histidine 237 lines the L-proline pocket. Serine 269 is an ATP binding site. The interaction with tRNA stretch occupies residues 346–376 (EMRGVPLRVEIGPRDLEKGAAVISRRDTGEK). Zn(2+)-binding residues include cysteine 436, cysteine 441, cysteine 464, and cysteine 467.

Belongs to the class-II aminoacyl-tRNA synthetase family. ProS type 3 subfamily. As to quaternary structure, homodimer. The dimer is functionally asymmetric: only one of the two active sites at a time is able to form prolyl-adenylate, and only one tRNA molecule binds per dimer. Interacts with LeuRS, which enhances tRNA(Pro) aminoacylation.

Its subcellular location is the cytoplasm. The enzyme catalyses tRNA(Pro) + L-proline + ATP = L-prolyl-tRNA(Pro) + AMP + diphosphate. Functionally, catalyzes the attachment of proline to tRNA(Pro) in a two-step reaction: proline is first activated by ATP to form Pro-AMP and then transferred to the acceptor end of tRNA(Pro). Can inadvertently accommodate and process cysteine. The sequence is that of Proline--tRNA ligase (proS) from Methanothermobacter thermautotrophicus (strain ATCC 29096 / DSM 1053 / JCM 10044 / NBRC 100330 / Delta H) (Methanobacterium thermoautotrophicum).